The chain runs to 412 residues: Heme chaperone HemW (412 aa).

The Radical SAM core domain maps to 4 to 241; that stretch reads GTYLMPTAAY…RHGQEVLTQA (238 aa). Tyr-13 is an S-adenosyl-L-methionine binding site. [2Fe-2S] cluster contacts are provided by Cys-19, Cys-23, and Cys-26. Residues Gly-72, 73–74, Glu-105, Gln-132, Arg-144, and Asp-169 each bind S-adenosyl-L-methionine; that span reads GT.

It belongs to the anaerobic coproporphyrinogen-III oxidase family. HemW subfamily. The cofactor is [4Fe-4S] cluster.

It localises to the cytoplasm. In terms of biological role, probably acts as a heme chaperone, transferring heme to an unknown acceptor. Binds one molecule of heme per monomer, possibly covalently. Binds 1 [2Fe-2S] cluster. Although this protein has sequence motifs typically found in proteins binding the [4Fe-4S]-AdoMet radical-SAM cluster and S-adenosylmethionine, spectroscopic evidence suggests that a [2Fe-2S] cluster is present; S-adenosylmethionine was not detected. Has no detectable coproporphyrinogen-III oxidase activity. This Synechocystis sp. (strain ATCC 27184 / PCC 6803 / Kazusa) protein is Heme chaperone HemW.